Reading from the N-terminus, the 365-residue chain is ATP-dependent (S)-NAD(P)H-hydrate dehydratase (365 aa).

The N-terminal 43 residues, 1-43 (MLVKPSIISGLVRLTSHSPSSSSSVLRRQEFLVRTLCGSPIIR), are a transit peptide targeting the chloroplast. At leucine 2 the chain carries N-acetylserine. One can recognise a YjeF C-terminal domain in the interval 53–361 (AESVLRTVTP…ECLGESLEDI (309 aa)). (6S)-NADPHX is bound by residues glycine 169 and 222 to 228 (NVNEYKR). Residues 262–266 (KGKSD) and 281–290 (GSPRRCGGQG) each bind ATP. Residue aspartate 291 participates in (6S)-NADPHX binding.

This sequence belongs to the NnrD/CARKD family. It depends on Mg(2+) as a cofactor.

The protein resides in the plastid. It localises to the chloroplast. It is found in the cytoplasm. The enzyme catalyses (6S)-NADHX + ATP = ADP + phosphate + NADH + H(+). The catalysed reaction is (6S)-NADPHX + ATP = ADP + phosphate + NADPH + H(+). Its function is as follows. Catalyzes the dehydration of the S-form of NAD(P)HX at the expense of ATP, which is converted to ADP. Together with NAD(P)HX epimerase, which catalyzes the epimerization of the S- and R-forms, the enzyme allows the repair of both epimers of NAD(P)HX, a damaged form of NAD(P)H that is a result of enzymatic or heat-dependent hydration. This chain is ATP-dependent (S)-NAD(P)H-hydrate dehydratase, found in Arabidopsis thaliana (Mouse-ear cress).